Consider the following 1091-residue polypeptide: Methionine S-methyltransferase (1091 aa).

It belongs to the class I-like SAM-binding methyltransferase superfamily. As to quaternary structure, homotetramer.

The protein localises to the cytoplasm. It catalyses the reaction L-methionine + S-adenosyl-L-methionine = S-methyl-L-methionine + S-adenosyl-L-homocysteine. Functionally, catalyzes the S-methylmethionine (SMM) biosynthesis from adenosyl-L-homocysteine (AdoMet) and methionine. SMM biosynthesis (by MMT1) and degradation (by HMT-1, HMT-2 and HMT-3) constitute the SMM cycle in plants, which is probably required to achieve short term control of AdoMet level. Also able to catalyze the selenium-methylmethionine (SeMM) from AdoMet and selenium-methionine (SeMet). May play a role in phoem sulfur transport; such function is however not essential. This chain is Methionine S-methyltransferase (MMT1), found in Zea mays (Maize).